The chain runs to 520 residues: TnpB-like protein L770 (520 aa).

The disordered stretch occupies residues 23–44 (KTKKKVFVKKKPPDKKPLKKPV). Zn(2+)-binding residues include C474, C477, C491, and C494.

It in the central section; belongs to the transposase 2 family. The protein in the C-terminal section; belongs to the transposase 35 family.

This Acanthamoeba polyphaga mimivirus (APMV) protein is TnpB-like protein L770.